Here is a 184-residue protein sequence, read N- to C-terminus: Cell number regulator 5 (184 aa).

Residues 91 to 111 form a helical membrane-spanning segment; it reads MLWGLLTSLCCVFTGGLVLAV. The interval 162–184 is disordered; the sequence is RTGSGSSPAPNVTPPPVQTMDEL.

The protein belongs to the cornifelin family. Expressed in roots, leaves, stalks, immature ears, endosperm and pollen.

The protein resides in the membrane. The sequence is that of Cell number regulator 5 (CNR5) from Zea mays (Maize).